We begin with the raw amino-acid sequence, 911 residues long: Protein translocase subunit SecA (911 aa).

Residues Gln-86, 104–108, and Asp-494 each bind ATP; that span reads GEGKT. The disordered stretch occupies residues 856–911; it reads VEGIDAPQRPAQLRFTGPSEDGQSAVTRSGTDSGATVAAGTNRRSRRQAERRGRRG. Positions 876 to 889 are enriched in polar residues; that stretch reads DGQSAVTRSGTDSG. Positions 902–911 are enriched in basic and acidic residues; sequence RQAERRGRRG.

It belongs to the SecA family. As to quaternary structure, monomer and homodimer. Part of the essential Sec protein translocation apparatus which comprises SecA, SecYEG and auxiliary proteins SecDF. Other proteins may also be involved.

It localises to the cell membrane. The protein resides in the cytoplasm. The catalysed reaction is ATP + H2O + cellular proteinSide 1 = ADP + phosphate + cellular proteinSide 2.. Functionally, part of the Sec protein translocase complex. Interacts with the SecYEG preprotein conducting channel. Has a central role in coupling the hydrolysis of ATP to the transfer of proteins into and across the cell membrane, serving as an ATP-driven molecular motor driving the stepwise translocation of polypeptide chains across the membrane. The protein is Protein translocase subunit SecA of Micrococcus luteus (strain ATCC 4698 / DSM 20030 / JCM 1464 / CCM 169 / CCUG 5858 / IAM 1056 / NBRC 3333 / NCIMB 9278 / NCTC 2665 / VKM Ac-2230) (Micrococcus lysodeikticus).